Consider the following 368-residue polypeptide: Agmatine deiminase (368 aa).

Cysteine 357 functions as the Amidino-cysteine intermediate in the catalytic mechanism.

It belongs to the agmatine deiminase family. In terms of assembly, homodimer.

It catalyses the reaction agmatine + H2O = N-carbamoylputrescine + NH4(+). Its pathway is amine and polyamine biosynthesis; putrescine biosynthesis via agmatine pathway; N-carbamoylputrescine from agmatine: step 1/1. In terms of biological role, mediates the hydrolysis of agmatine into N-carbamoylputrescine in the arginine decarboxylase (ADC) pathway of putrescine biosynthesis, a basic polyamine. The protein is Agmatine deiminase of Ectopseudomonas mendocina (strain ymp) (Pseudomonas mendocina).